A 341-amino-acid polypeptide reads, in one-letter code: NADH-quinone oxidoreductase subunit H 1 (341 aa).

9 consecutive transmembrane segments (helical) span residues 7–27 (IILT…ISLL), 46–66 (PNVV…KYIF), 80–100 (FFLA…VIPF), 111–131 (VAIL…IMGG), 157–177 (LGLI…SHIV), 183–203 (AFGL…LFFI), 244–264 (YIAI…GWLS), 273–293 (VFWM…VKAI), and 305–325 (IGWK…AFLA).

Belongs to the complex I subunit 1 family. In terms of assembly, NDH-1 is composed of 14 different subunits. Subunits NuoA, H, J, K, L, M, N constitute the membrane sector of the complex.

The protein resides in the cell inner membrane. The catalysed reaction is a quinone + NADH + 5 H(+)(in) = a quinol + NAD(+) + 4 H(+)(out). In terms of biological role, NDH-1 shuttles electrons from NADH, via FMN and iron-sulfur (Fe-S) centers, to quinones in the respiratory chain. The immediate electron acceptor for the enzyme in this species is believed to be ubiquinone. Couples the redox reaction to proton translocation (for every two electrons transferred, four hydrogen ions are translocated across the cytoplasmic membrane), and thus conserves the redox energy in a proton gradient. This subunit may bind ubiquinone. In Cereibacter sphaeroides (strain ATCC 17029 / ATH 2.4.9) (Rhodobacter sphaeroides), this protein is NADH-quinone oxidoreductase subunit H 1.